The primary structure comprises 108 residues: Tubulin-specific chaperone A (108 aa).

Ala2 bears the N-acetylalanine mark.

It belongs to the TBCA family. Supercomplex made of cofactors A to E. Cofactors A and D function by capturing and stabilizing tubulin in a quasi-native conformation. Cofactor E binds to the cofactor D-tubulin complex; interaction with cofactor C then causes the release of tubulin polypeptides that are committed to the native state.

The protein resides in the cytoplasm. It localises to the cytoskeleton. Functionally, tubulin-folding protein; involved in the early step of the tubulin folding pathway. The chain is Tubulin-specific chaperone A (Tbca) from Rattus norvegicus (Rat).